Here is a 242-residue protein sequence, read N- to C-terminus: Phosphoribosylaminoimidazole-succinocarboxamide synthase (242 aa).

Belongs to the SAICAR synthetase family.

The enzyme catalyses 5-amino-1-(5-phospho-D-ribosyl)imidazole-4-carboxylate + L-aspartate + ATP = (2S)-2-[5-amino-1-(5-phospho-beta-D-ribosyl)imidazole-4-carboxamido]succinate + ADP + phosphate + 2 H(+). It functions in the pathway purine metabolism; IMP biosynthesis via de novo pathway; 5-amino-1-(5-phospho-D-ribosyl)imidazole-4-carboxamide from 5-amino-1-(5-phospho-D-ribosyl)imidazole-4-carboxylate: step 1/2. The sequence is that of Phosphoribosylaminoimidazole-succinocarboxamide synthase from Magnetococcus marinus (strain ATCC BAA-1437 / JCM 17883 / MC-1).